We begin with the raw amino-acid sequence, 250 residues long: Uracil-DNA glycosylase (250 aa).

The active-site Proton acceptor is the Asp-78.

The protein belongs to the uracil-DNA glycosylase (UDG) superfamily. UNG family.

Its subcellular location is the cytoplasm. It carries out the reaction Hydrolyzes single-stranded DNA or mismatched double-stranded DNA and polynucleotides, releasing free uracil.. Functionally, excises uracil residues from the DNA which can arise as a result of misincorporation of dUMP residues by DNA polymerase or due to deamination of cytosine. The polypeptide is Uracil-DNA glycosylase (Albidiferax ferrireducens (strain ATCC BAA-621 / DSM 15236 / T118) (Rhodoferax ferrireducens)).